Here is a 753-residue protein sequence, read N- to C-terminus: 5-methyltetrahydropteroyltriglutamate--homocysteine methyltransferase (753 aa).

5-methyltetrahydropteroyltri-L-glutamate contacts are provided by residues 17-20 and K117; that span reads RELK. L-homocysteine-binding positions include 431–433 and E484; that span reads IGS. Residues 431–433 and E484 each bind L-methionine; that span reads IGS. Residues 515–516 and W561 contribute to the 5-methyltetrahydropteroyltri-L-glutamate site; that span reads RC. D599 serves as a coordination point for L-homocysteine. D599 serves as a coordination point for L-methionine. E605 contacts 5-methyltetrahydropteroyltri-L-glutamate. 3 residues coordinate Zn(2+): H641, C643, and E665. The Proton donor role is filled by H694. C726 lines the Zn(2+) pocket.

The protein belongs to the vitamin-B12 independent methionine synthase family. It depends on Zn(2+) as a cofactor.

The enzyme catalyses 5-methyltetrahydropteroyltri-L-glutamate + L-homocysteine = tetrahydropteroyltri-L-glutamate + L-methionine. It participates in amino-acid biosynthesis; L-methionine biosynthesis via de novo pathway; L-methionine from L-homocysteine (MetE route): step 1/1. Its function is as follows. Catalyzes the transfer of a methyl group from 5-methyltetrahydrofolate to homocysteine resulting in methionine formation. This chain is 5-methyltetrahydropteroyltriglutamate--homocysteine methyltransferase, found in Escherichia coli (strain ATCC 8739 / DSM 1576 / NBRC 3972 / NCIMB 8545 / WDCM 00012 / Crooks).